The following is an 84-amino-acid chain: Gomesin-like peptide (84 aa).

The first 23 residues, 1–23 (MNRTRALVCLFLAVLILAHESEA), serve as a signal peptide directing secretion. Residue Gln24 is modified to Pyrrolidone carboxylic acid. Intrachain disulfides connect Cys25–Cys38 and Cys29–Cys34. Arginine amide is present on Arg41. Positions 42–84 (GKRSVEEPSGGAQVVEKRAVDDADIPSAVEERELDEEESIEFR) are excised as a propeptide.

Expressed by the venom gland.

It is found in the secreted. Antibacterial peptide. This Hadronyche infensa (Fraser island funnel-web spider) protein is Gomesin-like peptide.